We begin with the raw amino-acid sequence, 325 residues long: MSWITPDLIEILLSILKAVVILLVVVTCGAFMSFGERRLLGLFQNRYGPNRVGWGGSLQLVADMIKMFFKEDWIPKFSDRVIFTLAPMIAFTSLLLSFAIVPVSPNWVVADLNIGILFFLMMAGLAVYAVLFAGWSSNNKYSLLGAMRASAQTVSYEVFLGLSLMGVVAQAGSFNMTDIVNNQAHLWNVIPQFFGFVTFAIAGVAVCHRHPFDQPEAEQELADGYHIEYSGMKFGLFFVGEYIGIVTVSALMVTLFFGGWHGPFLPPFVWFALKTAFFMMMFILIRASLPRPRYDQVMSFGWKVCLPLTLINLLVTAAVILWQAQ.

9 helical membrane passes run 11-31 (ILLSILKAVVILLVVVTCGAF), 50-69 (NRVGWGGSLQLVADMIKMFF), 81-101 (VIFTLAPMIAFTSLLLSFAIV), 114-134 (IGILFFLMMAGLAVYAVLFAG), 154-174 (VSYEVFLGLSLMGVVAQAGSF), 186-206 (LWNVIPQFFGFVTFAIAGVAV), 237-257 (FFVGEYIGIVTVSALMVTLFF), 265-285 (LPPFVWFALKTAFFMMMFILI), and 304-324 (VCLPLTLINLLVTAAVILWQA).

This sequence belongs to the complex I subunit 1 family. As to quaternary structure, NDH-1 is composed of 13 different subunits. Subunits NuoA, H, J, K, L, M, N constitute the membrane sector of the complex.

It localises to the cell inner membrane. It catalyses the reaction a quinone + NADH + 5 H(+)(in) = a quinol + NAD(+) + 4 H(+)(out). Its function is as follows. NDH-1 shuttles electrons from NADH, via FMN and iron-sulfur (Fe-S) centers, to quinones in the respiratory chain. The immediate electron acceptor for the enzyme in this species is believed to be ubiquinone. Couples the redox reaction to proton translocation (for every two electrons transferred, four hydrogen ions are translocated across the cytoplasmic membrane), and thus conserves the redox energy in a proton gradient. This subunit may bind ubiquinone. The chain is NADH-quinone oxidoreductase subunit H from Salmonella agona (strain SL483).